Consider the following 68-residue polypeptide: Large ribosomal subunit protein uL30 (68 aa).

This sequence belongs to the universal ribosomal protein uL30 family. In terms of assembly, part of the 50S ribosomal subunit.

The chain is Large ribosomal subunit protein uL30 from Bartonella henselae (strain ATCC 49882 / DSM 28221 / CCUG 30454 / Houston 1) (Rochalimaea henselae).